The chain runs to 121 residues: Small ribosomal subunit protein uS13 (121 aa).

Residues 91 to 121 (HRKGLPMRGQRTRTNARTRKGPRKAGVALKK) form a disordered region.

The protein belongs to the universal ribosomal protein uS13 family. Part of the 30S ribosomal subunit. Forms a loose heterodimer with protein S19. Forms two bridges to the 50S subunit in the 70S ribosome.

Its function is as follows. Located at the top of the head of the 30S subunit, it contacts several helices of the 16S rRNA. In the 70S ribosome it contacts the 23S rRNA (bridge B1a) and protein L5 of the 50S subunit (bridge B1b), connecting the 2 subunits; these bridges are implicated in subunit movement. Contacts the tRNAs in the A and P-sites. The protein is Small ribosomal subunit protein uS13 of Cupriavidus taiwanensis (strain DSM 17343 / BCRC 17206 / CCUG 44338 / CIP 107171 / LMG 19424 / R1) (Ralstonia taiwanensis (strain LMG 19424)).